A 164-amino-acid polypeptide reads, in one-letter code: Putative histone H2B type 2-D (164 aa).

The segment covering 1–12 (MPEPAKFAPAPK) has biased composition (low complexity). The disordered stretch occupies residues 1 to 33 (MPEPAKFAPAPKKGSKKAVTKAQKKDGKKRKRS). Pro-2 carries the post-translational modification N-acetylproline. Position 6 is an N6-(2-hydroxyisobutyryl)lysine; alternate (Lys-6). N6-(beta-hydroxybutyryl)lysine; alternate is present on residues Lys-6 and Lys-12. 3 positions are modified to N6-acetyllysine; alternate: Lys-6, Lys-12, and Lys-13. At Lys-6 the chain carries N6-butyryllysine; alternate. An N6-crotonyllysine; alternate mark is found at Lys-6, Lys-12, and Lys-13. An N6-lactoyllysine; alternate mark is found at Lys-6 and Lys-12. Lys-6 participates in a covalent cross-link: Glycyl lysine isopeptide (Lys-Gly) (interchain with G-Cter in SUMO2); alternate. The residue at position 13 (Lys-13) is an N6-(2-hydroxyisobutyryl)lysine; alternate. The residue at position 15 (Ser-15) is a Phosphoserine; by STK4/MST1. N6-acetyllysine; alternate is present on residues Lys-16, Lys-17, Lys-21, and Lys-24. N6-crotonyllysine; alternate is present on residues Lys-16, Lys-17, Lys-21, and Lys-24. Residues Lys-16, Lys-17, Lys-21, and Lys-24 each carry the N6-lactoyllysine; alternate modification. 2 positions are modified to N6-(beta-hydroxybutyryl)lysine; alternate: Lys-17 and Lys-21. At Lys-17 the chain carries N6-glutaryllysine; alternate. 2 positions are modified to N6-(2-hydroxyisobutyryl)lysine; alternate: Lys-21 and Lys-24. At Lys-21 the chain carries N6-butyryllysine; alternate. A Glycyl lysine isopeptide (Lys-Gly) (interchain with G-Cter in SUMO2); alternate cross-link involves residue Lys-21. N6-(2-hydroxyisobutyryl)lysine is present on Lys-25. Lys-35 carries the N6-(2-hydroxyisobutyryl)lysine; alternate modification. At Lys-35 the chain carries N6-(beta-hydroxybutyryl)lysine; alternate. Lys-35 carries the N6-crotonyllysine; alternate modification. Lys-35 carries the post-translational modification N6-glutaryllysine; alternate. At Lys-35 the chain carries N6-succinyllysine; alternate. Lys-35 participates in a covalent cross-link: Glycyl lysine isopeptide (Lys-Gly) (interchain with G-Cter in ubiquitin); alternate. Ser-37 carries the phosphoserine; by AMPK modification. N6-(2-hydroxyisobutyryl)lysine; alternate is present on residues Lys-44, Lys-47, and Lys-58. Lys-44 is modified (N6-lactoyllysine; alternate). 2 positions are modified to N6-glutaryllysine; alternate: Lys-44 and Lys-47. Lys-47 carries the N6-methyllysine; alternate modification. Residue Lys-58 is modified to N6,N6-dimethyllysine; alternate. Arg-80 carries the dimethylated arginine modification. Lys-86 is subject to N6-(2-hydroxyisobutyryl)lysine; alternate. The residue at position 86 (Lys-86) is an N6-(beta-hydroxybutyryl)lysine; alternate. N6-acetyllysine; alternate is present on Lys-86. Lys-86 carries the N6-lactoyllysine; alternate modification. N6,N6,N6-trimethyllysine; alternate is present on Lys-86. Omega-N-methylarginine is present on residues Arg-87 and Arg-93. Residues 111 to 140 (PCPRAPRRSPSTPAPSESLPGPGARSLPPS) form a disordered region.

Belongs to the histone H2B family. As to quaternary structure, the nucleosome is a histone octamer containing two molecules each of H2A, H2B, H3 and H4 assembled in one H3-H4 heterotetramer and two H2A-H2B heterodimers. The octamer wraps approximately 147 bp of DNA. Post-translationally, phosphorylation at Ser-37 (H2BS36ph) by AMPK in response to stress promotes transcription. Phosphorylated on Ser-15 (H2BS14ph) by STK4/MST1 during apoptosis; which facilitates apoptotic chromatin condensation. Also phosphorylated on Ser-15 in response to DNA double strand breaks (DSBs), and in correlation with somatic hypermutation and immunoglobulin class-switch recombination. Crotonylation (Kcr) is specifically present in male germ cells and marks testis-specific genes in post-meiotic cells, including X-linked genes that escape sex chromosome inactivation in haploid cells. Crotonylation marks active promoters and enhancers and confers resistance to transcriptional repressors. It is also associated with post-meiotically activated genes on autosomes. In terms of processing, lactylated in macrophages by EP300/P300 by using lactoyl-CoA directly derived from endogenous or exogenous lactate, leading to stimulates gene transcription.

The protein localises to the nucleus. It localises to the chromosome. Core component of nucleosome. Nucleosomes wrap and compact DNA into chromatin, limiting DNA accessibility to the cellular machineries which require DNA as a template. Histones thereby play a central role in transcription regulation, DNA repair, DNA replication and chromosomal stability. DNA accessibility is regulated via a complex set of post-translational modifications of histones, also called histone code, and nucleosome remodeling. The protein is Putative histone H2B type 2-D of Homo sapiens (Human).